A 594-amino-acid polypeptide reads, in one-letter code: UvrABC system protein C (594 aa).

The region spanning 14 to 91 (DSPGCYLHKD…IQENMPKYNI (78 aa)) is the GIY-YIG domain. The UVR domain maps to 196-231 (DKIIDDLRSKMLEASHNQEFERAAEYRDLISGIATM).

The protein belongs to the UvrC family. In terms of assembly, interacts with UvrB in an incision complex.

Its subcellular location is the cytoplasm. Its function is as follows. The UvrABC repair system catalyzes the recognition and processing of DNA lesions. UvrC both incises the 5' and 3' sides of the lesion. The N-terminal half is responsible for the 3' incision and the C-terminal half is responsible for the 5' incision. This chain is UvrABC system protein C, found in Streptococcus equi subsp. zooepidemicus (strain H70).